Reading from the N-terminus, the 238-residue chain is Ribitol-5-phosphate cytidylyltransferase (238 aa).

Residues 7 to 10 and 81 to 87 each bind CTP; these read LAGG and GDDRNHS.

Belongs to the IspD/TarI cytidylyltransferase family. TarI subfamily.

It carries out the reaction D-ribitol 5-phosphate + CTP + H(+) = CDP-L-ribitol + diphosphate. The protein operates within cell wall biogenesis; poly(ribitol phosphate) teichoic acid biosynthesis. Its function is as follows. Catalyzes the transfer of the cytidylyl group of CTP to D-ribitol 5-phosphate. The polypeptide is Ribitol-5-phosphate cytidylyltransferase (Staphylococcus epidermidis (strain ATCC 12228 / FDA PCI 1200)).